A 101-amino-acid polypeptide reads, in one-letter code: Large ribosomal subunit protein bL28 (101 aa).

This sequence belongs to the bacterial ribosomal protein bL28 family.

This chain is Large ribosomal subunit protein bL28, found in Rhodopseudomonas palustris (strain BisB18).